A 457-amino-acid polypeptide reads, in one-letter code: NADP-specific glutamate dehydrogenase (457 aa).

Lys111 is a catalytic residue.

It belongs to the Glu/Leu/Phe/Val dehydrogenases family. As to quaternary structure, homohexamer.

It carries out the reaction L-glutamate + NADP(+) + H2O = 2-oxoglutarate + NH4(+) + NADPH + H(+). The protein is NADP-specific glutamate dehydrogenase (gdhA) of Agaricus bisporus (White button mushroom).